The primary structure comprises 142 residues: ATP synthase epsilon chain (142 aa).

The protein belongs to the ATPase epsilon chain family. F-type ATPases have 2 components, CF(1) - the catalytic core - and CF(0) - the membrane proton channel. CF(1) has five subunits: alpha(3), beta(3), gamma(1), delta(1), epsilon(1). CF(0) has three main subunits: a, b and c.

Its subcellular location is the cell inner membrane. In terms of biological role, produces ATP from ADP in the presence of a proton gradient across the membrane. The protein is ATP synthase epsilon chain of Actinobacillus succinogenes (strain ATCC 55618 / DSM 22257 / CCUG 43843 / 130Z).